The chain runs to 111 residues: Probable 4-amino-4-deoxy-L-arabinose-phosphoundecaprenol flippase subunit ArnE (111 aa).

3 consecutive transmembrane segments (helical) span residues 38 to 58, 61 to 81, and 91 to 111; these read LWLG…LLVL, LPVG…TLAA, and PRHW…GSAA. The EamA domain maps to 40–109; it reads LGLALICMGA…IISGIIILGS (70 aa).

This sequence belongs to the ArnE family. Heterodimer of ArnE and ArnF.

The protein resides in the cell inner membrane. Its pathway is bacterial outer membrane biogenesis; lipopolysaccharide biosynthesis. Translocates 4-amino-4-deoxy-L-arabinose-phosphoundecaprenol (alpha-L-Ara4N-phosphoundecaprenol) from the cytoplasmic to the periplasmic side of the inner membrane. The protein is Probable 4-amino-4-deoxy-L-arabinose-phosphoundecaprenol flippase subunit ArnE of Salmonella choleraesuis (strain SC-B67).